The following is a 45-amino-acid chain: Large ribosomal subunit protein bL34 (45 aa).

The protein belongs to the bacterial ribosomal protein bL34 family.

The polypeptide is Large ribosomal subunit protein bL34 (Streptomyces avermitilis (strain ATCC 31267 / DSM 46492 / JCM 5070 / NBRC 14893 / NCIMB 12804 / NRRL 8165 / MA-4680)).